A 240-amino-acid polypeptide reads, in one-letter code: Protein FAM246C (240 aa).

2 disordered regions span residues 1–117 (MAEP…WRSA) and 161–240 (LPAA…TRAA). Basic and acidic residues-rich tracts occupy residues 19–31 (EVLRRGTGRRRDP) and 60–74 (AASRSEVPRLLKLVE). The segment covering 165-175 (SPAPSPAPRPA) has biased composition (pro residues). The segment covering 176 to 187 (ARPCRGRSAPLA) has biased composition (low complexity).

Belongs to the FAM246 family.

The polypeptide is Protein FAM246C (Homo sapiens (Human)).